The chain runs to 367 residues: Alginate lyase (367 aa).

Positions 1–27 (MKTSHLIRIALPGALAAALLASQVSQA) are cleaved as a signal peptide. Substrate contacts are provided by residues 65 to 66 (SK), 138 to 139 (HT), and Y256.

This sequence belongs to the polysaccharide lyase 5 family.

The protein resides in the periplasm. The catalysed reaction is Eliminative cleavage of alginate to give oligosaccharides with 4-deoxy-alpha-L-erythro-hex-4-enuronosyl groups at their non-reducing ends and beta-D-mannuronate at their reducing end.. Catalyzes the depolymerization of alginate by cleaving the beta-1,4 glycosidic bond between two adjacent sugar residues via a beta-elimination mechanism. May serve to degrade mislocalized alginate that is trapped in the periplasmic space. This chain is Alginate lyase, found in Pseudomonas aeruginosa (strain LESB58).